Consider the following 89-residue polypeptide: Small ribosomal subunit protein uS15 (89 aa).

The disordered stretch occupies residues 1–23; that stretch reads MSLDTTEKQQLINANQTHGTDTG. A compositionally biased stretch (polar residues) spans 8-23; sequence KQQLINANQTHGTDTG.

The protein belongs to the universal ribosomal protein uS15 family. As to quaternary structure, part of the 30S ribosomal subunit. Forms a bridge to the 50S subunit in the 70S ribosome, contacting the 23S rRNA.

In terms of biological role, one of the primary rRNA binding proteins, it binds directly to 16S rRNA where it helps nucleate assembly of the platform of the 30S subunit by binding and bridging several RNA helices of the 16S rRNA. Forms an intersubunit bridge (bridge B4) with the 23S rRNA of the 50S subunit in the ribosome. The chain is Small ribosomal subunit protein uS15 from Prochlorococcus marinus (strain MIT 9313).